A 318-amino-acid polypeptide reads, in one-letter code: Protease HtpX homolog (318 aa).

Transmembrane regions (helical) follow at residues 1–21 (MLEA…VGRL), 35–55 (ILGL…GSAI), and 56–76 (AGLV…SRIV). His-167 is a binding site for Zn(2+). Glu-168 is an active-site residue. His-171 serves as a coordination point for Zn(2+). Transmembrane regions (helical) follow at residues 178 to 198 (LVMT…DPWL) and 209 to 229 (IAFL…LVAA). Glu-235 is a Zn(2+) binding site.

This sequence belongs to the peptidase M48B family. The cofactor is Zn(2+).

It localises to the cell membrane. This chain is Protease HtpX homolog, found in Methanopyrus kandleri (strain AV19 / DSM 6324 / JCM 9639 / NBRC 100938).